Here is a 213-residue protein sequence, read N- to C-terminus: Thiamine-phosphate synthase (213 aa).

4-amino-2-methyl-5-(diphosphooxymethyl)pyrimidine-binding positions include 40–44 (QFREK) and Asn-75. Residues Asp-76 and Asp-95 each contribute to the Mg(2+) site. Ser-113 lines the 4-amino-2-methyl-5-(diphosphooxymethyl)pyrimidine pocket. 139–141 (TPS) contributes to the 2-[(2R,5Z)-2-carboxy-4-methylthiazol-5(2H)-ylidene]ethyl phosphate binding site. A 4-amino-2-methyl-5-(diphosphooxymethyl)pyrimidine-binding site is contributed by Lys-142. 2-[(2R,5Z)-2-carboxy-4-methylthiazol-5(2H)-ylidene]ethyl phosphate contacts are provided by residues Gly-171 and 191-192 (IS).

This sequence belongs to the thiamine-phosphate synthase family. It depends on Mg(2+) as a cofactor.

It carries out the reaction 2-[(2R,5Z)-2-carboxy-4-methylthiazol-5(2H)-ylidene]ethyl phosphate + 4-amino-2-methyl-5-(diphosphooxymethyl)pyrimidine + 2 H(+) = thiamine phosphate + CO2 + diphosphate. The catalysed reaction is 2-(2-carboxy-4-methylthiazol-5-yl)ethyl phosphate + 4-amino-2-methyl-5-(diphosphooxymethyl)pyrimidine + 2 H(+) = thiamine phosphate + CO2 + diphosphate. The enzyme catalyses 4-methyl-5-(2-phosphooxyethyl)-thiazole + 4-amino-2-methyl-5-(diphosphooxymethyl)pyrimidine + H(+) = thiamine phosphate + diphosphate. It functions in the pathway cofactor biosynthesis; thiamine diphosphate biosynthesis; thiamine phosphate from 4-amino-2-methyl-5-diphosphomethylpyrimidine and 4-methyl-5-(2-phosphoethyl)-thiazole: step 1/1. Functionally, condenses 4-methyl-5-(beta-hydroxyethyl)thiazole monophosphate (THZ-P) and 2-methyl-4-amino-5-hydroxymethyl pyrimidine pyrophosphate (HMP-PP) to form thiamine monophosphate (TMP). The sequence is that of Thiamine-phosphate synthase from Staphylococcus aureus (strain JH1).